The following is a 389-amino-acid chain: Probable nitrate transporter NarT (389 aa).

A run of 12 helical transmembrane segments spans residues 14–34, 45–65, 69–89, 97–117, 139–159, 161–181, 211–231, 246–266, 268–288, 294–314, 331–351, and 353–373; these read TLSL…MPFI, ISII…PFGY, IVGA…PIFF, GMLM…SVGV, GNIG…IIGW, TTVR…FIFG, WYFI…NYLV, GVFI…GDKF, AVKV…ILGI, LFTV…GLIF, IVSM…TYVA, and LTGS…IALF.

It belongs to the major facilitator superfamily. Nitrate/nitrite porter (TC 2.A.1.8) family.

The protein localises to the cell membrane. Functionally, probably required for nitrate uptake under anoxic conditions. Also possibly involved in excretion of nitrite produced by the dissimilatory reduction of nitrate. The sequence is that of Probable nitrate transporter NarT (narT) from Staphylococcus aureus (strain MRSA252).